A 232-amino-acid chain; its full sequence is Putative ABC transporter ATP-binding protein VNG_2317G (232 aa).

One can recognise an ABC transporter domain in the interval 2 to 231; it reads LSVRNLVHRY…GALPDAGVRP (230 aa). Residue 34–41 participates in ATP binding; sequence GANGSGKT.

This sequence belongs to the ABC transporter superfamily.

The protein localises to the cell membrane. In terms of biological role, probably part of an ABC transporter complex. Responsible for energy coupling to the transport system. This is Putative ABC transporter ATP-binding protein VNG_2317G from Halobacterium salinarum (strain ATCC 700922 / JCM 11081 / NRC-1) (Halobacterium halobium).